We begin with the raw amino-acid sequence, 226 residues long: Thymidylate kinase (226 aa).

16–23 (GIDGAGKT) is a binding site for ATP.

It belongs to the thymidylate kinase family.

It carries out the reaction dTMP + ATP = dTDP + ADP. In terms of biological role, phosphorylation of dTMP to form dTDP in both de novo and salvage pathways of dTTP synthesis. The sequence is that of Thymidylate kinase from Xanthomonas euvesicatoria pv. vesicatoria (strain 85-10) (Xanthomonas campestris pv. vesicatoria).